The sequence spans 267 residues: Pyridoxine 5'-phosphate synthase (267 aa).

N8 is a binding site for 3-amino-2-oxopropyl phosphate. A 1-deoxy-D-xylulose 5-phosphate-binding site is contributed by D10–H11. 3-amino-2-oxopropyl phosphate is bound at residue R19. The active-site Proton acceptor is H44. R46 and H51 together coordinate 1-deoxy-D-xylulose 5-phosphate. Residue E71 is the Proton acceptor of the active site. A 1-deoxy-D-xylulose 5-phosphate-binding site is contributed by T101. H219 serves as the catalytic Proton donor. 3-amino-2-oxopropyl phosphate is bound by residues G220 and G241–H242.

This sequence belongs to the PNP synthase family. Homooctamer; tetramer of dimers.

It localises to the cytoplasm. It catalyses the reaction 3-amino-2-oxopropyl phosphate + 1-deoxy-D-xylulose 5-phosphate = pyridoxine 5'-phosphate + phosphate + 2 H2O + H(+). It participates in cofactor biosynthesis; pyridoxine 5'-phosphate biosynthesis; pyridoxine 5'-phosphate from D-erythrose 4-phosphate: step 5/5. Functionally, catalyzes the complicated ring closure reaction between the two acyclic compounds 1-deoxy-D-xylulose-5-phosphate (DXP) and 3-amino-2-oxopropyl phosphate (1-amino-acetone-3-phosphate or AAP) to form pyridoxine 5'-phosphate (PNP) and inorganic phosphate. The polypeptide is Pyridoxine 5'-phosphate synthase (Helicobacter hepaticus (strain ATCC 51449 / 3B1)).